The chain runs to 296 residues: Isoprenyl transferase (296 aa).

Basic residues predominate over residues 1–11 (MATERNRRRKG). The segment at 1-29 (MATERNRRRKGSYPQLPPAPDDYPTFPDK) is disordered. The active site involves Asp-76. Asp-76 is a binding site for Mg(2+). Residues 77-80 (GNGR), Trp-81, Arg-89, His-93, and 121-123 (STE) contribute to the substrate site. The active-site Proton acceptor is the Asn-124. Residues Trp-125, Arg-127, Arg-244, and 250–252 (RAS) contribute to the substrate site. Glu-263 contributes to the Mg(2+) binding site.

This sequence belongs to the UPP synthase family. As to quaternary structure, homodimer. Mg(2+) serves as cofactor.

Catalyzes the condensation of isopentenyl diphosphate (IPP) with allylic pyrophosphates generating different type of terpenoids. The chain is Isoprenyl transferase from Mycolicibacterium parafortuitum (Mycobacterium parafortuitum).